The following is a 490-amino-acid chain: Ribulose bisphosphate carboxylase large chain (490 aa).

Substrate contacts are provided by Asn-127 and Thr-177. Catalysis depends on Lys-179, which acts as the Proton acceptor. Lys-181 is a binding site for substrate. Residues Lys-205, Asp-207, and Glu-208 each coordinate Mg(2+). At Lys-205 the chain carries N6-carboxylysine. His-297 acts as the Proton acceptor in catalysis. Residues Arg-298, His-330, and Ser-382 each contribute to the substrate site.

This sequence belongs to the RuBisCO large chain family. Type I subfamily. In terms of assembly, heterohexadecamer of 8 large chains and 8 small chains. The cofactor is Mg(2+).

It localises to the plastid. Its subcellular location is the chloroplast. The enzyme catalyses 2 (2R)-3-phosphoglycerate + 2 H(+) = D-ribulose 1,5-bisphosphate + CO2 + H2O. It catalyses the reaction D-ribulose 1,5-bisphosphate + O2 = 2-phosphoglycolate + (2R)-3-phosphoglycerate + 2 H(+). Functionally, ruBisCO catalyzes two reactions: the carboxylation of D-ribulose 1,5-bisphosphate, the primary event in carbon dioxide fixation, as well as the oxidative fragmentation of the pentose substrate in the photorespiration process. Both reactions occur simultaneously and in competition at the same active site. The chain is Ribulose bisphosphate carboxylase large chain from Cylindrotheca sp. (strain N1) (Marine diatom).